The chain runs to 152 residues: SsrA-binding protein (152 aa).

The segment at 124 to 152 is disordered; that stretch reads KKLHDKRDTAAERDWQRDKARLMKGDRGD. Positions 128-152 are enriched in basic and acidic residues; sequence DKRDTAAERDWQRDKARLMKGDRGD.

The protein belongs to the SmpB family.

The protein resides in the cytoplasm. Its function is as follows. Required for rescue of stalled ribosomes mediated by trans-translation. Binds to transfer-messenger RNA (tmRNA), required for stable association of tmRNA with ribosomes. tmRNA and SmpB together mimic tRNA shape, replacing the anticodon stem-loop with SmpB. tmRNA is encoded by the ssrA gene; the 2 termini fold to resemble tRNA(Ala) and it encodes a 'tag peptide', a short internal open reading frame. During trans-translation Ala-aminoacylated tmRNA acts like a tRNA, entering the A-site of stalled ribosomes, displacing the stalled mRNA. The ribosome then switches to translate the ORF on the tmRNA; the nascent peptide is terminated with the 'tag peptide' encoded by the tmRNA and targeted for degradation. The ribosome is freed to recommence translation, which seems to be the essential function of trans-translation. The protein is SsrA-binding protein of Caulobacter vibrioides (strain ATCC 19089 / CIP 103742 / CB 15) (Caulobacter crescentus).